The primary structure comprises 465 residues: Serine carboxypeptidase-like 19 (465 aa).

The signal sequence occupies residues 1–23; sequence MRNLSFIVLFLLTLFFIHHLVDA. 77–79 provides a ligand contact to substrate; it reads TGG. 3 disulfides stabilise this stretch: cysteine 82-cysteine 353, cysteine 246-cysteine 260, and cysteine 284-cysteine 320. The N-linked (GlcNAc...) asparagine glycan is linked to asparagine 103. 177 to 179 contributes to the substrate binding site; sequence DSY. Residue serine 178 is part of the active site. A propeptide spans 292-317 (linker peptide); sequence DTPNIRTDRRRVMKEFSVNDSSSLPP. N-linked (GlcNAc...) asparagine glycans are attached at residues asparagine 310 and asparagine 373. Aspartate 389 is an active-site residue. An N-linked (GlcNAc...) asparagine glycan is attached at asparagine 405. 439–443 contributes to the substrate binding site; it reads KGGGH. Histidine 443 is a catalytic residue.

This sequence belongs to the peptidase S10 family. Heterodimer. N-glycosylated. In terms of tissue distribution, expressed in roots and flowers, and at lower levels in young leaves and seedlings. Expressed in mature seeds and detected in expanding siliques.

The protein resides in the secreted. It carries out the reaction 1-O-(trans-sinapoyl)-beta-D-glucose + choline = O-sinapoylcholine + D-glucose. With respect to regulation, slightly inhibited by phenylmethylsulfonyl fluoride (PMSF). Its function is as follows. Involved in plants secondary metabolism. Functions as acyltransferase to form the sinapate ester sinapoylcholine also known as sinapine. Able to convert in vitro benzoylglucose into benzoylcholine. In Arabidopsis thaliana (Mouse-ear cress), this protein is Serine carboxypeptidase-like 19.